Reading from the N-terminus, the 725-residue chain is Methionine--tRNA ligase (725 aa).

A 'HIGH' region motif is present at residues 27–37 (PYANGQIHIGH). 4 residues coordinate Zn(2+): cysteine 158, cysteine 161, cysteine 171, and cysteine 174. The 'KMSKS' region motif lies at 348–352 (KMSKS). Lysine 351 is an ATP binding site. The 107-residue stretch at 619–725 (DFAKIDLRIA…SGAKPGMRVK (107 aa)) folds into the tRNA-binding domain.

It belongs to the class-I aminoacyl-tRNA synthetase family. MetG type 1 subfamily. As to quaternary structure, homodimer. It depends on Zn(2+) as a cofactor.

It localises to the cytoplasm. The catalysed reaction is tRNA(Met) + L-methionine + ATP = L-methionyl-tRNA(Met) + AMP + diphosphate. In terms of biological role, is required not only for elongation of protein synthesis but also for the initiation of all mRNA translation through initiator tRNA(fMet) aminoacylation. The chain is Methionine--tRNA ligase from Burkholderia pseudomallei (strain 668).